The primary structure comprises 82 residues: Acyl carrier protein (82 aa).

The Carrier domain occupies 3 to 81; that stretch reads LSREKVLESI…DAVDFIIAAK (79 aa). Serine 41 bears the O-(pantetheine 4'-phosphoryl)serine mark.

It belongs to the acyl carrier protein (ACP) family. 4'-phosphopantetheine is transferred from CoA to a specific serine of apo-ACP by AcpS. This modification is essential for activity because fatty acids are bound in thioester linkage to the sulfhydryl of the prosthetic group.

The protein resides in the cytoplasm. Its pathway is lipid metabolism; fatty acid biosynthesis. In terms of biological role, carrier of the growing fatty acid chain in fatty acid biosynthesis. The chain is Acyl carrier protein from Tropheryma whipplei (strain Twist) (Whipple's bacillus).